Here is a 408-residue protein sequence, read N- to C-terminus: LL-diaminopimelate aminotransferase (408 aa).

Substrate contacts are provided by Tyr-15 and Gly-42. Pyridoxal 5'-phosphate contacts are provided by residues Tyr-72, Ser-108–Lys-109, Tyr-132, Asn-187, Tyr-218, and Ser-246–Ser-248. Substrate-binding residues include Lys-109, Tyr-132, and Asn-187. An N6-(pyridoxal phosphate)lysine modification is found at Lys-249. Pyridoxal 5'-phosphate is bound by residues Arg-257 and Asn-291. Residues Asn-291 and Arg-387 each coordinate substrate.

Belongs to the class-I pyridoxal-phosphate-dependent aminotransferase family. LL-diaminopimelate aminotransferase subfamily. As to quaternary structure, homodimer. Pyridoxal 5'-phosphate serves as cofactor.

The catalysed reaction is (2S,6S)-2,6-diaminopimelate + 2-oxoglutarate = (S)-2,3,4,5-tetrahydrodipicolinate + L-glutamate + H2O + H(+). The protein operates within amino-acid biosynthesis; L-lysine biosynthesis via DAP pathway; LL-2,6-diaminopimelate from (S)-tetrahydrodipicolinate (aminotransferase route): step 1/1. In terms of biological role, involved in the synthesis of meso-diaminopimelate (m-DAP or DL-DAP), required for both lysine and peptidoglycan biosynthesis. Catalyzes the direct conversion of tetrahydrodipicolinate to LL-diaminopimelate. The chain is LL-diaminopimelate aminotransferase from Prochlorococcus marinus (strain NATL2A).